The primary structure comprises 428 residues: Anaerobic glycerol-3-phosphate dehydrogenase subunit B (428 aa).

It belongs to the anaerobic G-3-P dehydrogenase subunit B family. As to quaternary structure, composed of a catalytic GlpA/B dimer and of membrane bound GlpC. FMN is required as a cofactor.

The enzyme catalyses a quinone + sn-glycerol 3-phosphate = dihydroxyacetone phosphate + a quinol. It participates in polyol metabolism; glycerol degradation via glycerol kinase pathway; glycerone phosphate from sn-glycerol 3-phosphate (anaerobic route): step 1/1. Conversion of glycerol 3-phosphate to dihydroxyacetone. Uses fumarate or nitrate as electron acceptor. The sequence is that of Anaerobic glycerol-3-phosphate dehydrogenase subunit B from Pasteurella multocida (strain Pm70).